The sequence spans 1013 residues: EF-hand calcium-binding domain-containing protein 6 (1013 aa).

EF-hand domains follow at residues 20–55, 145–180, 251–286, 287–322, and 352–387; these read KNIK…FCLK, KSYE…FIYQ, DRSA…VAIK, LSDS…NCRM, and RNLQ…FCPF. The interval 441–460 is disordered; it reads QKDEQQQPDLSERTKPTEDK. 6 consecutive EF-hand domains span residues 482 to 517, 589 to 624, 695 to 730, 731 to 766, 812 to 847, and 917 to 952; these read QQDP…TGMP, ESFR…LLLN, NRWS…FDIP, LTPR…NYSP, DLHQ…CGCS, and SSQL…FCYK. Ca(2+) is bound by residues aspartate 602, aspartate 604, aspartate 606, and aspartate 613. Position 732 is a phosphothreonine (threonine 732).

As to quaternary structure, microtubule inner protein component of sperm flagellar doublet microtubules. Binds PARK7. Part of a ternary complex containing PARK7, EFCAB6/DJBP and AR.

It localises to the nucleus. It is found in the cytoplasm. The protein localises to the cytoskeleton. The protein resides in the flagellum axoneme. Negatively regulates the androgen receptor by recruiting histone deacetylase complex, and protein DJ-1 antagonizes this inhibition by abrogation of this complex. Microtubule inner protein (MIP) part of the dynein-decorated doublet microtubules (DMTs) in cilia axoneme, which is required for motile cilia beating. This chain is EF-hand calcium-binding domain-containing protein 6 (EFCAB6), found in Pongo abelii (Sumatran orangutan).